Reading from the N-terminus, the 321-residue chain is Lipoyl synthase (321 aa).

[4Fe-4S] cluster-binding residues include cysteine 68, cysteine 73, cysteine 79, cysteine 94, cysteine 98, cysteine 101, and serine 308. One can recognise a Radical SAM core domain in the interval phenylalanine 80 to threonine 297.

The protein belongs to the radical SAM superfamily. Lipoyl synthase family. It depends on [4Fe-4S] cluster as a cofactor.

The protein resides in the cytoplasm. It carries out the reaction [[Fe-S] cluster scaffold protein carrying a second [4Fe-4S](2+) cluster] + N(6)-octanoyl-L-lysyl-[protein] + 2 oxidized [2Fe-2S]-[ferredoxin] + 2 S-adenosyl-L-methionine + 4 H(+) = [[Fe-S] cluster scaffold protein] + N(6)-[(R)-dihydrolipoyl]-L-lysyl-[protein] + 4 Fe(3+) + 2 hydrogen sulfide + 2 5'-deoxyadenosine + 2 L-methionine + 2 reduced [2Fe-2S]-[ferredoxin]. The protein operates within protein modification; protein lipoylation via endogenous pathway; protein N(6)-(lipoyl)lysine from octanoyl-[acyl-carrier-protein]: step 2/2. Catalyzes the radical-mediated insertion of two sulfur atoms into the C-6 and C-8 positions of the octanoyl moiety bound to the lipoyl domains of lipoate-dependent enzymes, thereby converting the octanoylated domains into lipoylated derivatives. The protein is Lipoyl synthase of Vibrio campbellii (strain ATCC BAA-1116).